Here is a 1186-residue protein sequence, read N- to C-terminus: Probable inactive serine/threonine-protein kinase DDB_G0293184 (1186 aa).

The span at 1–12 shows a compositional bias: acidic residues; that stretch reads MEQEDQQYEEDS. 2 disordered regions span residues 1 to 55 and 99 to 122; these read MEQE…NNDS and MEQQQQQQHLQPPLSPNSASNTNF. Low complexity-rich tracts occupy residues 34 to 48 and 99 to 110; these read TTTEITTTTTTTTPT and MEQQQQQQHLQP. In terms of domain architecture, Protein kinase spans 173–437; the sequence is YESPPTLGKY…VHDLLRHPWL (265 aa). ATP contacts are provided by residues 179-187 and lysine 205; that span reads LGKYDKVIL. Disordered stretches follow at residues 447 to 468 and 530 to 551; these read SSSSSSQAHPTVQSNNLNGNVN and YNNYNNNNNNNNNTNDNDNECG. Positions 453–468 are enriched in polar residues; the sequence is QAHPTVQSNNLNGNVN. Residues 530–545 show a composition bias toward low complexity; that stretch reads YNNYNNNNNNNNNTND. A coiled-coil region spans residues 631–659; it reads LKRTNQMANDLGRKYEILQSNIKRLEDYL. The segment covering 766–784 has biased composition (polar residues); that stretch reads NNLDPSNNNESVNLSTSPG. Disordered stretches follow at residues 766-911 and 959-988; these read NNLD…NGNN and ENKKHQKQKSLDSTNKQSPGSLGGAGGDVS. The span at 785-836 shows a compositional bias: low complexity; the sequence is SLVNSNSNPSISNSLNNNNNNNNNNNNNNNGNPNVIITTNNNCNSNSNGNNI. Positions 847–896 are enriched in basic and acidic residues; it reads KEVKEGKEIKEIKEPKEKDKDKEKDKDKEKDKDKEKDKDKEKEKDKDKEN. Residues 875–909 are a coiled coil; the sequence is EKDKDKEKDKDKEKEKDKDKENNNNNNSNNNNNNG. Residues 897–911 are compositionally biased toward low complexity; sequence NNNNNSNNNNNNGNN. Positions 969–978 are enriched in polar residues; the sequence is LDSTNKQSPG. The Rho-GAP domain occupies 1004-1186; that stretch reads VRLDDLMTRE…LSFPKFNLSV (183 aa).

This sequence belongs to the protein kinase superfamily. STE Ser/Thr protein kinase family.

This is Probable inactive serine/threonine-protein kinase DDB_G0293184 from Dictyostelium discoideum (Social amoeba).